The primary structure comprises 253 residues: Small ribosomal subunit protein uS2 (253 aa).

It belongs to the universal ribosomal protein uS2 family.

This is Small ribosomal subunit protein uS2 from Parvibaculum lavamentivorans (strain DS-1 / DSM 13023 / NCIMB 13966).